Here is a 549-residue protein sequence, read N- to C-terminus: Glutamyl-tRNA(Gln) amidotransferase subunit B, chloroplastic/mitochondrial (549 aa).

This sequence belongs to the GatB/GatE family. GatB subfamily. As to quaternary structure, subunit of the heterotrimeric GatCAB amidotransferase (AdT) complex, composed of A, B and C subunits.

Its subcellular location is the mitochondrion. It localises to the plastid. It is found in the chloroplast. It catalyses the reaction L-glutamyl-tRNA(Gln) + L-glutamine + ATP + H2O = L-glutaminyl-tRNA(Gln) + L-glutamate + ADP + phosphate + H(+). Allows the formation of correctly charged Gln-tRNA(Gln) through the transamidation of misacylated Glu-tRNA(Gln) in chloroplasts and mitochondria. The reaction takes place in the presence of glutamine and ATP through an activated gamma-phospho-Glu-tRNA(Gln). The polypeptide is Glutamyl-tRNA(Gln) amidotransferase subunit B, chloroplastic/mitochondrial (Ricinus communis (Castor bean)).